Reading from the N-terminus, the 229-residue chain is Urease accessory protein UreF (229 aa).

Belongs to the UreF family. As to quaternary structure, ureD, UreF and UreG form a complex that acts as a GTP-hydrolysis-dependent molecular chaperone, activating the urease apoprotein by helping to assemble the nickel containing metallocenter of UreC. The UreE protein probably delivers the nickel.

The protein resides in the cytoplasm. In terms of biological role, required for maturation of urease via the functional incorporation of the urease nickel metallocenter. This is Urease accessory protein UreF from Alcanivorax borkumensis (strain ATCC 700651 / DSM 11573 / NCIMB 13689 / SK2).